The sequence spans 70 residues: ATP synthase subunit c (70 aa).

Helical transmembrane passes span F3 to M23 and F47 to L67.

This sequence belongs to the ATPase C chain family. F-type ATPases have 2 components, F(1) - the catalytic core - and F(0) - the membrane proton channel. F(1) has five subunits: alpha(3), beta(3), gamma(1), delta(1), epsilon(1). F(0) has three main subunits: a(1), b(2) and c(10-14). The alpha and beta chains form an alternating ring which encloses part of the gamma chain. F(1) is attached to F(0) by a central stalk formed by the gamma and epsilon chains, while a peripheral stalk is formed by the delta and b chains.

The protein localises to the cell membrane. Its function is as follows. F(1)F(0) ATP synthase produces ATP from ADP in the presence of a proton or sodium gradient. F-type ATPases consist of two structural domains, F(1) containing the extramembraneous catalytic core and F(0) containing the membrane proton channel, linked together by a central stalk and a peripheral stalk. During catalysis, ATP synthesis in the catalytic domain of F(1) is coupled via a rotary mechanism of the central stalk subunits to proton translocation. In terms of biological role, key component of the F(0) channel; it plays a direct role in translocation across the membrane. A homomeric c-ring of between 10-14 subunits forms the central stalk rotor element with the F(1) delta and epsilon subunits. The polypeptide is ATP synthase subunit c (Lacticaseibacillus casei (strain BL23) (Lactobacillus casei)).